The primary structure comprises 431 residues: Glutamate-1-semialdehyde 2,1-aminomutase (431 aa).

Position 269 is an N6-(pyridoxal phosphate)lysine (Lys269).

Belongs to the class-III pyridoxal-phosphate-dependent aminotransferase family. HemL subfamily. In terms of assembly, homodimer. Pyridoxal 5'-phosphate is required as a cofactor.

It localises to the cytoplasm. The enzyme catalyses (S)-4-amino-5-oxopentanoate = 5-aminolevulinate. The protein operates within porphyrin-containing compound metabolism; protoporphyrin-IX biosynthesis; 5-aminolevulinate from L-glutamyl-tRNA(Glu): step 2/2. The chain is Glutamate-1-semialdehyde 2,1-aminomutase from Tolumonas auensis (strain DSM 9187 / NBRC 110442 / TA 4).